The sequence spans 166 residues: Interferon gamma (166 aa).

An N-terminal signal peptide occupies residues 1–23 (MKYTSYFLALQLCLLLGFSGSYG). Glutamine 24 is subject to Pyrrolidone carboxylic acid. Asparagine 39 and asparagine 106 each carry an N-linked (GlcNAc...) asparagine glycan.

The protein belongs to the type II (or gamma) interferon family. In terms of assembly, homodimer. Interacts with IFNGR1 (via extracellular domain); this interaction promotes IFNGR1 dimerization. As to expression, released primarily from activated T lymphocytes.

The protein resides in the secreted. Type II interferon produced by immune cells such as T-cells and NK cells that plays crucial roles in antimicrobial, antiviral, and antitumor responses by activating effector immune cells and enhancing antigen presentation. Primarily signals through the JAK-STAT pathway after interaction with its receptor IFNGR1 to affect gene regulation. Upon IFNG binding, IFNGR1 intracellular domain opens out to allow association of downstream signaling components JAK2, JAK1 and STAT1, leading to STAT1 activation, nuclear translocation and transcription of IFNG-regulated genes. Many of the induced genes are transcription factors such as IRF1 that are able to further drive regulation of a next wave of transcription. Plays a role in class I antigen presentation pathway by inducing a replacement of catalytic proteasome subunits with immunoproteasome subunits. In turn, increases the quantity, quality, and repertoire of peptides for class I MHC loading. Increases the efficiency of peptide generation also by inducing the expression of activator PA28 that associates with the proteasome and alters its proteolytic cleavage preference. Up-regulates as well MHC II complexes on the cell surface by promoting expression of several key molecules such as cathepsins B/CTSB, H/CTSH, and L/CTSL. Participates in the regulation of hematopoietic stem cells during development and under homeostatic conditions by affecting their development, quiescence, and differentiation. The polypeptide is Interferon gamma (IFNG) (Moschus berezovskii (Chinese forest musk deer)).